The following is a 472-amino-acid chain: Ribosomal protein uS12 methylthiotransferase RimO (472 aa).

Positions 1–114 (MKFHIITLGC…IGDVVDTLQR (114 aa)) constitute an MTTase N-terminal domain. [4Fe-4S] cluster is bound by residues Cys10, Cys46, Cys78, Cys171, Cys175, and Cys178. One can recognise a Radical SAM core domain in the interval 157 to 388 (RITGPSAYLK…MRLQQGISRQ (232 aa)). Residues 391–460 (RRWVGRVIRV…DYDLWGEMVE (70 aa)) form the TRAM domain.

The protein belongs to the methylthiotransferase family. RimO subfamily. The cofactor is [4Fe-4S] cluster.

Its subcellular location is the cytoplasm. It catalyses the reaction L-aspartate(89)-[ribosomal protein uS12]-hydrogen + (sulfur carrier)-SH + AH2 + 2 S-adenosyl-L-methionine = 3-methylsulfanyl-L-aspartate(89)-[ribosomal protein uS12]-hydrogen + (sulfur carrier)-H + 5'-deoxyadenosine + L-methionine + A + S-adenosyl-L-homocysteine + 2 H(+). Catalyzes the methylthiolation of an aspartic acid residue of ribosomal protein uS12. The sequence is that of Ribosomal protein uS12 methylthiotransferase RimO from Roseiflexus sp. (strain RS-1).